The primary structure comprises 1579 residues: tRNA (guanosine(18)-2'-O)-methyltransferase TARBP1 (1579 aa).

Met1 carries the post-translational modification N-acetylmethionine. S-adenosyl-L-homocysteine contacts are provided by Val1501, Gly1524, Ile1544, Gln1546, and Leu1553.

The protein belongs to the class IV-like SAM-binding methyltransferase superfamily. RNA methyltransferase TrmH family. As to quaternary structure, monomer and homodimer.

It catalyses the reaction guanosine(18) in tRNA + S-adenosyl-L-methionine = 2'-O-methylguanosine(18) in tRNA + S-adenosyl-L-homocysteine + H(+). S-adenosyl-L-methionine-dependent 2'-O-ribose methyltransferase that catalyzes the formation of 2'-O-methylguanosine at position 18 (Gm18) in a subset of tRNA. Selectively mediates Gm18 methylation of tRNAGln-TTG/CTG and tRNASer-TGA/GCT. Gm18 modification can enhance the stability of modified tRNAs. This chain is tRNA (guanosine(18)-2'-O)-methyltransferase TARBP1, found in Mus musculus (Mouse).